A 439-amino-acid chain; its full sequence is CBL-interacting serine/threonine-protein kinase 20 (439 aa).

A Protein kinase domain is found at 12 to 266; it reads YELGRLLGQG…IEKIMENSWF (255 aa). ATP is bound by residues 18–26 and Lys41; that span reads LGQGTFAKV. Asp134 functions as the Proton acceptor in the catalytic mechanism. The segment at 152–181 is activation loop; sequence DFGLSALRESKQQDGLLHTTCGTPAYVAPE. A Phosphoserine modification is found at Ser156. Residue Thr170 is modified to Phosphothreonine. The NAF domain maps to 297-322; that stretch reads VKPMSYNAFDLISSLSQGFDLSGLFE. The segment at 326–356 is PPI; it reads RSESKFTTKKDAKEIVSKFEEIATSSERFNL.

Belongs to the protein kinase superfamily. CAMK Ser/Thr protein kinase family. SNF1 subfamily. Mn(2+) serves as cofactor. Post-translationally, autophosphorylated. Confined to mature leaves.

It catalyses the reaction L-seryl-[protein] + ATP = O-phospho-L-seryl-[protein] + ADP + H(+). The catalysed reaction is L-threonyl-[protein] + ATP = O-phospho-L-threonyl-[protein] + ADP + H(+). In terms of biological role, CIPK serine-threonine protein kinases interact with CBL proteins. Binding of a CBL protein to the regulatory NAF domain of CIPK protein lead to the activation of the kinase in a calcium-dependent manner. Required for the abscisic acid-mediated (ABA) signaling pathway involved in seed germination and growth elongation inhibition. This chain is CBL-interacting serine/threonine-protein kinase 20 (CIPK20), found in Arabidopsis thaliana (Mouse-ear cress).